The primary structure comprises 517 residues: T-complex protein 11-like protein 2 (517 aa).

The tract at residues 1 to 59 (MPFNGEKQCVSEDQQSDSESSRFAEGVASLSDYECSRQSFTSDSSSKSSSPASTSPPRG) is disordered. The residue at position 16 (S16) is a Phosphoserine. Low complexity predominate over residues 36 to 55 (SRQSFTSDSSSKSSSPASTS).

This sequence belongs to the TCP11 family. Interacts with FMNL2; this interaction promotes muscle-derived satellite cell (MDSC) migration and differentiation.

It localises to the cytoplasm. It is found in the cytoskeleton. In terms of biological role, promotes the migration of muscle-derived satellite cells (MDSCs) during differentiation throught interaction with FMNL2 and therefore may participate in microfilament assembly. The polypeptide is T-complex protein 11-like protein 2 (Mus musculus (Mouse)).